Reading from the N-terminus, the 154-residue chain is Putative glutamine amidotransferase-like protein RP712 (154 aa).

A Glutamine amidotransferase type-1 domain is found at 1 to 94 (MSIEKEKFWA…QQSVWSFHNK (94 aa)).

The protein is Putative glutamine amidotransferase-like protein RP712 of Rickettsia prowazekii (strain Madrid E).